Consider the following 436-residue polypeptide: 3-ketoacyl-CoA thiolase (436 aa).

C99 (acyl-thioester intermediate) is an active-site residue. Catalysis depends on proton acceptor residues H392 and C422.

This sequence belongs to the thiolase-like superfamily. Thiolase family. Heterotetramer of two alpha chains (FadJ) and two beta chains (FadI).

It localises to the cytoplasm. The catalysed reaction is an acyl-CoA + acetyl-CoA = a 3-oxoacyl-CoA + CoA. The protein operates within lipid metabolism; fatty acid beta-oxidation. Its function is as follows. Catalyzes the final step of fatty acid oxidation in which acetyl-CoA is released and the CoA ester of a fatty acid two carbons shorter is formed. The protein is 3-ketoacyl-CoA thiolase of Salmonella schwarzengrund (strain CVM19633).